Consider the following 288-residue polypeptide: Acetyl-coenzyme A carboxylase carboxyl transferase subunit beta (288 aa).

Residues Met32 to Arg288 enclose the CoA carboxyltransferase N-terminal domain. Zn(2+)-binding residues include Cys36, Cys39, Cys54, and Cys57. The C4-type zinc-finger motif lies at Cys36–Cys57.

This sequence belongs to the AccD/PCCB family. In terms of assembly, acetyl-CoA carboxylase is a heterohexamer composed of biotin carboxyl carrier protein (AccB), biotin carboxylase (AccC) and two subunits each of ACCase subunit alpha (AccA) and ACCase subunit beta (AccD). Zn(2+) serves as cofactor.

It is found in the cytoplasm. It carries out the reaction N(6)-carboxybiotinyl-L-lysyl-[protein] + acetyl-CoA = N(6)-biotinyl-L-lysyl-[protein] + malonyl-CoA. It functions in the pathway lipid metabolism; malonyl-CoA biosynthesis; malonyl-CoA from acetyl-CoA: step 1/1. Functionally, component of the acetyl coenzyme A carboxylase (ACC) complex. Biotin carboxylase (BC) catalyzes the carboxylation of biotin on its carrier protein (BCCP) and then the CO(2) group is transferred by the transcarboxylase to acetyl-CoA to form malonyl-CoA. The protein is Acetyl-coenzyme A carboxylase carboxyl transferase subunit beta of Enterococcus faecalis (strain ATCC 700802 / V583).